Here is a 160-residue protein sequence, read N- to C-terminus: Small ribosomal subunit protein uS7 (160 aa).

It belongs to the universal ribosomal protein uS7 family. As to quaternary structure, part of the 30S ribosomal subunit. Contacts proteins S9 and S11.

One of the primary rRNA binding proteins, it binds directly to 16S rRNA where it nucleates assembly of the head domain of the 30S subunit. Is located at the subunit interface close to the decoding center, probably blocks exit of the E-site tRNA. The sequence is that of Small ribosomal subunit protein uS7 from Rickettsia prowazekii (strain Madrid E).